The sequence spans 225 residues: ATP-dependent Clp protease proteolytic subunit (225 aa).

Catalysis depends on Ser101, which acts as the Nucleophile. Residue His126 is part of the active site.

It belongs to the peptidase S14 family. In terms of assembly, component of the chloroplastic Clp protease core complex.

Its subcellular location is the plastid. The protein resides in the chloroplast stroma. It catalyses the reaction Hydrolysis of proteins to small peptides in the presence of ATP and magnesium. alpha-casein is the usual test substrate. In the absence of ATP, only oligopeptides shorter than five residues are hydrolyzed (such as succinyl-Leu-Tyr-|-NHMec, and Leu-Tyr-Leu-|-Tyr-Trp, in which cleavage of the -Tyr-|-Leu- and -Tyr-|-Trp bonds also occurs).. Functionally, cleaves peptides in various proteins in a process that requires ATP hydrolysis. Has a chymotrypsin-like activity. Plays a major role in the degradation of misfolded proteins. The polypeptide is ATP-dependent Clp protease proteolytic subunit (Chlorokybus atmophyticus (Soil alga)).